Here is a 751-residue protein sequence, read N- to C-terminus: Cytosolic neutral trehalase (751 aa).

A compositionally biased stretch (polar residues) spans 1 to 15 (MDDSALPSNTSNGIN). 2 disordered regions span residues 1-42 (MDDS…NPES) and 64-88 (DFHE…NPRK). The span at 64-78 (DFHEMLGDRNTRRGS) shows a compositional bias: basic and acidic residues. Residues aspartate 105, aspartate 107, asparagine 109, glutamine 111, and aspartate 116 each contribute to the Ca(2+) site. Substrate-binding positions include arginine 292, 299-300 (WD), asparagine 336, 345-347 (RSQ), glutamate 412, arginine 461, and glycine 464. Active-site proton donor/acceptor residues include aspartate 466 and glutamate 670.

It belongs to the glycosyl hydrolase 37 family. Ca(2+) is required as a cofactor.

It localises to the cytoplasm. The enzyme catalyses alpha,alpha-trehalose + H2O = alpha-D-glucose + beta-D-glucose. The protein operates within carbohydrate degradation. Activated by calcium. Functionally, hydrolyzes intracellular trehalose to glucose. The disaccharide trehalose serves as a storage carbohydrate that is mobilized during conidial germination. Regulates the level of trehalose as a protectant for cell integrity during heat stress. The polypeptide is Cytosolic neutral trehalase (Emericella nidulans (strain FGSC A4 / ATCC 38163 / CBS 112.46 / NRRL 194 / M139) (Aspergillus nidulans)).